The following is a 368-amino-acid chain: H-2 class I histocompatibility antigen, D-P alpha chain (368 aa).

A signal peptide spans Met-1–Ala-21. Positions Gly-22–Gly-111 are alpha-1. Over Gly-22 to Ser-303 the chain is Extracellular. Residue Asn-107 is glycosylated (N-linked (GlcNAc...) asparagine). Residues Gly-112–Thr-203 form an alpha-2 region. Cys-122 and Cys-185 are disulfide-bonded. Residues Asn-197 and Asn-277 are each glycosylated (N-linked (GlcNAc...) asparagine). Positions Asp-204–Trp-295 are alpha-3. Residues Pro-206 to Arg-294 enclose the Ig-like C1-type domain. A disulfide bridge links Cys-224 with Cys-280. Positions Glu-296 to Ser-303 are connecting peptide. A helical transmembrane segment spans residues Tyr-304–Met-330. The Cytoplasmic portion of the chain corresponds to Arg-331–Ala-368. Residues Ser-350 and Ser-353 each carry the phosphoserine modification.

This sequence belongs to the MHC class I family. In terms of assembly, heterodimer of an alpha chain and a beta chain (beta-2-microglobulin).

Its subcellular location is the membrane. Functionally, involved in the presentation of foreign antigens to the immune system. The sequence is that of H-2 class I histocompatibility antigen, D-P alpha chain (H2-D1) from Mus musculus (Mouse).